The chain runs to 325 residues: DNA repair and recombination protein RadA (325 aa).

ATP is bound at residue 107 to 114; sequence GEFGSGKT.

Belongs to the eukaryotic RecA-like protein family.

In terms of biological role, involved in DNA repair and in homologous recombination. Binds and assemble on single-stranded DNA to form a nucleoprotein filament. Hydrolyzes ATP in a ssDNA-dependent manner and promotes DNA strand exchange between homologous DNA molecules. The sequence is that of DNA repair and recombination protein RadA from Methanococcoides burtonii (strain DSM 6242 / NBRC 107633 / OCM 468 / ACE-M).